The sequence spans 37 residues: Fructose-bisphosphate aldolase A (37 aa).

This sequence belongs to the class I fructose-bisphosphate aldolase family. Tetramer.

It carries out the reaction beta-D-fructose 1,6-bisphosphate = D-glyceraldehyde 3-phosphate + dihydroxyacetone phosphate. Its pathway is carbohydrate degradation; glycolysis; D-glyceraldehyde 3-phosphate and glycerone phosphate from D-glucose: step 4/4. Functionally, plays a key role in glycolysis and gluconeogenesis. The sequence is that of Fructose-bisphosphate aldolase A from Thunnus albacares (Yellowfin tuna).